The primary structure comprises 513 residues: ATP synthase subunit alpha (513 aa).

An ATP-binding site is contributed by 169-176 (GDRQTGKT).

The protein belongs to the ATPase alpha/beta chains family. In terms of assembly, F-type ATPases have 2 components, CF(1) - the catalytic core - and CF(0) - the membrane proton channel. CF(1) has five subunits: alpha(3), beta(3), gamma(1), delta(1), epsilon(1). CF(0) has three main subunits: a(1), b(2) and c(9-12). The alpha and beta chains form an alternating ring which encloses part of the gamma chain. CF(1) is attached to CF(0) by a central stalk formed by the gamma and epsilon chains, while a peripheral stalk is formed by the delta and b chains.

The protein resides in the cell inner membrane. The catalysed reaction is ATP + H2O + 4 H(+)(in) = ADP + phosphate + 5 H(+)(out). Functionally, produces ATP from ADP in the presence of a proton gradient across the membrane. The alpha chain is a regulatory subunit. The sequence is that of ATP synthase subunit alpha from Shewanella putrefaciens (strain CN-32 / ATCC BAA-453).